The following is a 152-amino-acid chain: Phosphopantetheine adenylyltransferase (152 aa).

Position 9 (S9) interacts with substrate. Residues 9–10 (SF) and H17 each bind ATP. Residues K41, T73, and R87 each coordinate substrate. Residues 88–90 (GLR), E98, and 122–128 (TSFISSS) each bind ATP.

Belongs to the bacterial CoaD family. Homohexamer. Requires Mg(2+) as cofactor.

It localises to the cytoplasm. It catalyses the reaction (R)-4'-phosphopantetheine + ATP + H(+) = 3'-dephospho-CoA + diphosphate. The protein operates within cofactor biosynthesis; coenzyme A biosynthesis; CoA from (R)-pantothenate: step 4/5. Functionally, reversibly transfers an adenylyl group from ATP to 4'-phosphopantetheine, yielding dephospho-CoA (dPCoA) and pyrophosphate. The polypeptide is Phosphopantetheine adenylyltransferase (Flavobacterium johnsoniae (strain ATCC 17061 / DSM 2064 / JCM 8514 / BCRC 14874 / CCUG 350202 / NBRC 14942 / NCIMB 11054 / UW101) (Cytophaga johnsonae)).